A 616-amino-acid polypeptide reads, in one-letter code: Chaperone protein HscA (616 aa).

The protein belongs to the heat shock protein 70 family.

In terms of biological role, chaperone involved in the maturation of iron-sulfur cluster-containing proteins. Has a low intrinsic ATPase activity which is markedly stimulated by HscB. Involved in the maturation of IscU. This Enterobacter sp. (strain 638) protein is Chaperone protein HscA.